The primary structure comprises 486 residues: Ribulose bisphosphate carboxylase large chain 1 (486 aa).

Substrate-binding residues include Asn-125 and Thr-175. Residue Lys-177 is the Proton acceptor of the active site. Lys-179 lines the substrate pocket. Mg(2+) contacts are provided by Lys-203, Asp-205, and Glu-206. Lys-203 is modified (N6-carboxylysine). His-295 functions as the Proton acceptor in the catalytic mechanism. Substrate-binding residues include Arg-296, His-328, and Ser-380.

It belongs to the RuBisCO large chain family. Type I subfamily. In terms of assembly, heterohexadecamer of 8 large chains and 8 small chains. Mg(2+) is required as a cofactor.

It carries out the reaction 2 (2R)-3-phosphoglycerate + 2 H(+) = D-ribulose 1,5-bisphosphate + CO2 + H2O. The enzyme catalyses D-ribulose 1,5-bisphosphate + O2 = 2-phosphoglycolate + (2R)-3-phosphoglycerate + 2 H(+). RuBisCO catalyzes two reactions: the carboxylation of D-ribulose 1,5-bisphosphate, the primary event in carbon dioxide fixation, as well as the oxidative fragmentation of the pentose substrate. Both reactions occur simultaneously and in competition at the same active site. This chain is Ribulose bisphosphate carboxylase large chain 1, found in Bradyrhizobium sp. (strain ORS 278).